Here is a 340-residue protein sequence, read N- to C-terminus: 4-amino-5-hydroxymethyl-2-methylpyrimidine phosphate synthase THI12 (340 aa).

Lysine 62 carries the N6-(pyridoxal phosphate)lysine modification. Residue histidine 66 is part of the active site. Pyridoxal 5'-phosphate is bound at residue 115 to 118 (GEFG). The CCCFC; essential for catalytic activity, may be the site of iron coordination signature appears at 195-199 (CCCFC).

It belongs to the NMT1/THI5 family. In terms of assembly, homodimer. It depends on Fe cation as a cofactor.

The enzyme catalyses N(6)-(pyridoxal phosphate)-L-lysyl-[4-amino-5-hydroxymethyl-2-methylpyrimidine phosphate synthase] + L-histidyl-[4-amino-5-hydroxymethyl-2-methylpyrimidine phosphate synthase] + 2 Fe(3+) + 4 H2O = L-lysyl-[4-amino-5-hydroxymethyl-2-methylpyrimidine phosphate synthase] + (2S)-2-amino-5-hydroxy-4-oxopentanoyl-[4-amino-5-hydroxymethyl-2-methylpyrimidine phosphate synthase] + 4-amino-2-methyl-5-(phosphooxymethyl)pyrimidine + 3-oxopropanoate + 2 Fe(2+) + 2 H(+). It functions in the pathway cofactor biosynthesis; thiamine diphosphate biosynthesis. In terms of biological role, responsible for the formation of the pyrimidine heterocycle in the thiamine biosynthesis pathway. Catalyzes the formation of hydroxymethylpyrimidine phosphate (HMP-P) from histidine and pyridoxal phosphate (PLP). The protein uses PLP and the active site histidine to form HMP-P, generating an inactive enzyme. The enzyme can only undergo a single turnover, which suggests it is a suicide enzyme. This chain is 4-amino-5-hydroxymethyl-2-methylpyrimidine phosphate synthase THI12, found in Saccharomyces cerevisiae (strain ATCC 204508 / S288c) (Baker's yeast).